Here is an 819-residue protein sequence, read N- to C-terminus: Proteome of basal body protein 15 (819 aa).

2 stretches are compositionally biased toward low complexity: residues 46–59 (PASSPAKAPANPGR) and 572–581 (RQQQQQQQHT). 2 disordered regions span residues 46-72 (PASSPAKAPANPGRSAPPSPGPRLATG) and 564-590 (ERQRRLLERQQQQQQQHTKGGGGGGGV). Residues 546–580 (YVVLREAVARVQARMEQQERQRRLLERQQQQQQQH) are a coiled coil.

The protein resides in the cytoplasm. The protein localises to the cytoskeleton. Its subcellular location is the microtubule organizing center. It is found in the centrosome. It localises to the centriole. The sequence is that of Proteome of basal body protein 15 from Chlamydomonas reinhardtii (Chlamydomonas smithii).